The chain runs to 606 residues: NADH-ubiquinone oxidoreductase chain 5 (606 aa).

16 helical membrane passes run 1–21 (MNPF…PIMM), 43–63 (AFTL…EMII), 87–107 (VMFI…SMWY), 112–132 (PFIN…MILV), 137–157 (LFQL…LIGW), 171–191 (AILY…WFLT), 213–233 (LIGL…HPWL), 241–261 (TPVS…FLLI), 273–293 (VQTM…LCAI), 301–321 (IVAF…GINQ), 324–344 (LAFL…MCSG), 366–386 (MPFT…MPYL), 407–429 (WALL…IIFF), 457–477 (LLIG…PMTV), 482–502 (MPLY…MLAL), and 582–602 (GLIK…MTLF).

Belongs to the complex I subunit 5 family. As to quaternary structure, core subunit of respiratory chain NADH dehydrogenase (Complex I) which is composed of 45 different subunits.

It localises to the mitochondrion inner membrane. It catalyses the reaction a ubiquinone + NADH + 5 H(+)(in) = a ubiquinol + NAD(+) + 4 H(+)(out). Functionally, core subunit of the mitochondrial membrane respiratory chain NADH dehydrogenase (Complex I) which catalyzes electron transfer from NADH through the respiratory chain, using ubiquinone as an electron acceptor. Essential for the catalytic activity and assembly of complex I. The chain is NADH-ubiquinone oxidoreductase chain 5 (MT-ND5) from Sus scrofa (Pig).